We begin with the raw amino-acid sequence, 590 residues long: Glutamine--tRNA ligase (590 aa).

Positions 55–65 (PEPNGYLHIGH) match the 'HIGH' region motif. Residues 56-58 (EPN) and 62-68 (HIGHAKS) each bind ATP. Residues aspartate 93 and tyrosine 238 each contribute to the L-glutamine site. Residues threonine 257 and 292–293 (RL) contribute to the ATP site. A 'KMSKS' region motif is present at residues 299-303 (ITSKR).

This sequence belongs to the class-I aminoacyl-tRNA synthetase family. Monomer.

The protein resides in the cytoplasm. The enzyme catalyses tRNA(Gln) + L-glutamine + ATP = L-glutaminyl-tRNA(Gln) + AMP + diphosphate. This chain is Glutamine--tRNA ligase, found in Polynucleobacter necessarius subsp. necessarius (strain STIR1).